Reading from the N-terminus, the 739-residue chain is UPF0313 protein YgiQ (739 aa).

A Radical SAM core domain is found at 372–650 (AYEMIRFSVN…KALLRYHDPA (279 aa)). Residues Cys386, Cys390, and Cys393 each coordinate [4Fe-4S] cluster. The interval 686-739 (EARRQNRNTRPALTKHTPMATQCQTPATAKKASSTQSRPVNAGAKKRPKAAVGR) is disordered. The segment covering 704 to 724 (MATQCQTPATAKKASSTQSRP) has biased composition (polar residues). A compositionally biased stretch (basic residues) spans 729–739 (AKKRPKAAVGR).

It belongs to the UPF0313 family. It depends on [4Fe-4S] cluster as a cofactor.

The sequence is that of UPF0313 protein YgiQ from Escherichia coli O157:H7.